We begin with the raw amino-acid sequence, 292 residues long: Short chain dehydrogenases/reductase notP' (292 aa).

A disordered region spans residues 1-25 (MPQTSDGNVHAPQYREAKPSQGDPS). Leu-48, Asp-97, Lys-158, Tyr-193, Lys-197, Ile-230, and Thr-232 together coordinate NADP(+). Residue Tyr-193 is the Proton donor of the active site. The active-site Lowers pKa of active site Tyr is the Lys-197.

The protein belongs to the short-chain dehydrogenases/reductases (SDR) family.

Functionally, short chain dehydrogenases/reductase; part of the gene cluster that mediates the biosynthesis of notoamide, a fungal indole alkaloid that belongs to a family of natural products containing a characteristic bicyclo[2.2.2]diazaoctane core. The first step of notoamide biosynthesis involves coupling of L-proline and L-tryptophan by the bimodular NRPS notE', to produce cyclo-L-tryptophan-L-proline called brevianamide F. The reverse prenyltransferase notF' then acts as a deoxybrevianamide E synthase and converts brevianamide F to deoxybrevianamide E via reverse prenylation at C-2 of the indole ring leading to the bicyclo[2.2.2]diazaoctane core. Deoxybrevianamide E is further hydroxylated at C-6 of the indole ring, likely catalyzed by the cytochrome P450 monooxygenase notG', to yield 6-hydroxy-deoxybrevianamide E. 6-hydroxy-deoxybrevianamide E is a specific substrate of the prenyltransferase notC' for normal prenylation at C-7 to produce 6-hydroxy-7-prenyl-deoxybrevianamide, also called notoamide S. As the proposed pivotal branching point in notoamide biosynthesis, notoamide S can be diverted to notoamide E through an oxidative pyran ring closure putatively catalyzed by either notH' cytochrome P450 monooxygenase or the notD' FAD-linked oxidoreductase. This step would be followed by an indole 2,3-epoxidation-initiated pinacol-like rearrangement catalyzed by the notB' FAD-dependent monooxygenase leading to the formation of notoamide C and notoamide D. On the other hand notoamide S is converted to notoamide T by notH' (or notD'), a bifunctional oxidase that also functions as the intramolecular Diels-Alderase responsible for generation of (-)-notoamide T. To generate antipodal (+)-notoaminide T, notH (or notD) in Aspergillus strain MF297-2 is expected to catalyze a Diels-Alder reaction leading to the opposite stereochemistry. The remaining oxidoreductase notD' (or notH') likely catalyzes the oxidative pyran ring formation to yield (-)-stephacidin A. The FAD-dependent monooxygenase notI' is highly similar to notB' and is predicted to catalyze a similar conversion from (-)-stephacidin A to (+)-notoamide B via the 2,3-epoxidation of (-)-stephacidin A followed by a pinacol-type rearrangement. Finally, it remains unclear which enzyme could be responsible for the final hydroxylation steps leading to notoamide A and sclerotiamide. The function of notP' in the notoamide biosynthesis has not been determined yet. This chain is Short chain dehydrogenases/reductase notP', found in Aspergillus versicolor.